The sequence spans 1375 residues: DNA-directed RNA polymerase subunit beta (1375 aa).

It belongs to the RNA polymerase beta chain family. The RNAP catalytic core consists of 2 alpha, 1 beta, 1 beta' and 1 omega subunit. When a sigma factor is associated with the core the holoenzyme is formed, which can initiate transcription.

It catalyses the reaction RNA(n) + a ribonucleoside 5'-triphosphate = RNA(n+1) + diphosphate. In terms of biological role, DNA-dependent RNA polymerase catalyzes the transcription of DNA into RNA using the four ribonucleoside triphosphates as substrates. The polypeptide is DNA-directed RNA polymerase subunit beta (Coxiella burnetii (strain Dugway 5J108-111)).